A 484-amino-acid polypeptide reads, in one-letter code: ATP synthase subunit beta (484 aa).

Position 168–175 (168–175 (GGAGVGKT)) interacts with ATP.

It belongs to the ATPase alpha/beta chains family. In terms of assembly, F-type ATPases have 2 components, CF(1) - the catalytic core - and CF(0) - the membrane proton channel. CF(1) has five subunits: alpha(3), beta(3), gamma(1), delta(1), epsilon(1). CF(0) has three main subunits: a(1), b(2) and c(9-12). The alpha and beta chains form an alternating ring which encloses part of the gamma chain. CF(1) is attached to CF(0) by a central stalk formed by the gamma and epsilon chains, while a peripheral stalk is formed by the delta and b chains.

The protein resides in the cell membrane. The catalysed reaction is ATP + H2O + 4 H(+)(in) = ADP + phosphate + 5 H(+)(out). Functionally, produces ATP from ADP in the presence of a proton gradient across the membrane. The catalytic sites are hosted primarily by the beta subunits. This chain is ATP synthase subunit beta, found in Renibacterium salmoninarum (strain ATCC 33209 / DSM 20767 / JCM 11484 / NBRC 15589 / NCIMB 2235).